The sequence spans 628 residues: Putative ankyrin repeat protein L769 (628 aa).

4 ANK repeats span residues 217-246, 333-362, 421-451, and 512-542; these read NYMD…EYDF, DLDE…DINR, TAEN…NHDL, and NNLK…DQDY.

The protein is Putative ankyrin repeat protein L769 of Acanthamoeba polyphaga mimivirus (APMV).